A 170-amino-acid chain; its full sequence is Small ribosomal subunit protein uS9 (170 aa).

Residues 1–47 (MAETTPEQPLEEIDIDSYTTESEVPVEGEYTSESMASAFGEPQPAAG) are disordered.

The protein belongs to the universal ribosomal protein uS9 family.

The sequence is that of Small ribosomal subunit protein uS9 (rpsI) from Streptomyces coelicolor (strain ATCC BAA-471 / A3(2) / M145).